Here is a 388-residue protein sequence, read N- to C-terminus: Succinate--CoA ligase [ADP-forming] subunit beta (388 aa).

The ATP-grasp domain occupies 9-244 (KQLFAEYGLP…PSQDDAREAH (236 aa)). ATP is bound by residues lysine 46, 53 to 55 (GRG), glutamate 99, threonine 102, and glutamate 107. Mg(2+) contacts are provided by asparagine 199 and aspartate 213. Substrate is bound by residues asparagine 264 and 321–323 (GIV).

It belongs to the succinate/malate CoA ligase beta subunit family. As to quaternary structure, heterotetramer of two alpha and two beta subunits. Mg(2+) is required as a cofactor.

It carries out the reaction succinate + ATP + CoA = succinyl-CoA + ADP + phosphate. The catalysed reaction is GTP + succinate + CoA = succinyl-CoA + GDP + phosphate. The protein operates within carbohydrate metabolism; tricarboxylic acid cycle; succinate from succinyl-CoA (ligase route): step 1/1. Its function is as follows. Succinyl-CoA synthetase functions in the citric acid cycle (TCA), coupling the hydrolysis of succinyl-CoA to the synthesis of either ATP or GTP and thus represents the only step of substrate-level phosphorylation in the TCA. The beta subunit provides nucleotide specificity of the enzyme and binds the substrate succinate, while the binding sites for coenzyme A and phosphate are found in the alpha subunit. This Pseudomonas entomophila (strain L48) protein is Succinate--CoA ligase [ADP-forming] subunit beta.